Consider the following 66-residue polypeptide: Large ribosomal subunit protein uL29 (66 aa).

This sequence belongs to the universal ribosomal protein uL29 family.

This chain is Large ribosomal subunit protein uL29, found in Borrelia garinii subsp. bavariensis (strain ATCC BAA-2496 / DSM 23469 / PBi) (Borreliella bavariensis).